Reading from the N-terminus, the 248-residue chain is 2,3-bisphosphoglycerate-dependent phosphoglycerate mutase (248 aa).

Substrate contacts are provided by residues 8-15 (RHGESTWN), 21-22 (TG), arginine 60, 87-90 (ERHY), lysine 98, 114-115 (RR), and 183-184 (GN). Catalysis depends on histidine 9, which acts as the Tele-phosphohistidine intermediate. Catalysis depends on glutamate 87, which acts as the Proton donor/acceptor.

This sequence belongs to the phosphoglycerate mutase family. BPG-dependent PGAM subfamily. In terms of assembly, homodimer.

The catalysed reaction is (2R)-2-phosphoglycerate = (2R)-3-phosphoglycerate. Its pathway is carbohydrate degradation; glycolysis; pyruvate from D-glyceraldehyde 3-phosphate: step 3/5. Functionally, catalyzes the interconversion of 2-phosphoglycerate and 3-phosphoglycerate. The sequence is that of 2,3-bisphosphoglycerate-dependent phosphoglycerate mutase from Paraburkholderia phymatum (strain DSM 17167 / CIP 108236 / LMG 21445 / STM815) (Burkholderia phymatum).